The sequence spans 278 residues: Acyl-[acyl-carrier-protein]--UDP-N-acetylglucosamine O-acyltransferase (278 aa).

The protein belongs to the transferase hexapeptide repeat family. LpxA subfamily. In terms of assembly, homotrimer.

The protein localises to the cytoplasm. The enzyme catalyses a (3R)-hydroxyacyl-[ACP] + UDP-N-acetyl-alpha-D-glucosamine = a UDP-3-O-[(3R)-3-hydroxyacyl]-N-acetyl-alpha-D-glucosamine + holo-[ACP]. Its pathway is glycolipid biosynthesis; lipid IV(A) biosynthesis; lipid IV(A) from (3R)-3-hydroxytetradecanoyl-[acyl-carrier-protein] and UDP-N-acetyl-alpha-D-glucosamine: step 1/6. In terms of biological role, involved in the biosynthesis of lipid A, a phosphorylated glycolipid that anchors the lipopolysaccharide to the outer membrane of the cell. The sequence is that of Acyl-[acyl-carrier-protein]--UDP-N-acetylglucosamine O-acyltransferase from Brucella abortus (strain S19).